The primary structure comprises 204 residues: Guanylate kinase (204 aa).

The region spanning Gly-6–Thr-184 is the Guanylate kinase-like domain. Residue Gly-13–Gly-20 coordinates ATP.

Belongs to the guanylate kinase family.

It localises to the cytoplasm. The enzyme catalyses GMP + ATP = GDP + ADP. Essential for recycling GMP and indirectly, cGMP. The chain is Guanylate kinase (gmk) from Halalkalibacterium halodurans (strain ATCC BAA-125 / DSM 18197 / FERM 7344 / JCM 9153 / C-125) (Bacillus halodurans).